The following is a 779-amino-acid chain: Potassium/sodium hyperpolarization-activated cyclic nucleotide-gated channel 3 (779 aa).

A disordered region spans residues 1-47; that stretch reads MEEEARPAAGAGEAATPARETPPAAPAQARAASGGVPESAPEPKRRQ. Over 1–96 the chain is Cytoplasmic; that stretch reads MEEEARPAAG…PYSDFRFYWD (96 aa). Positions 7-32 are enriched in low complexity; it reads PAAGAGEAATPARETPPAAPAQARAA. An involved in subunit assembly region spans residues 45–90; that stretch reads RRQLGTLLQPTVNKFSLRVFGSHKAVEIEQERVKSAGAWIIHPYSD. The helical transmembrane segment at 97–117 threads the bilayer; sequence LIMLLLMVGNLIVLPVGITFF. Topologically, residues 118–123 are extracellular; sequence KEENSP. A helical transmembrane segment spans residues 124 to 144; that stretch reads PWIVFNVLSDTFFLLDLVLNF. Residues 145 to 170 are Cytoplasmic-facing; the sequence is RTGIVVEEGAEILLAPRAIRTRYLRT. A helical membrane pass occupies residues 171–191; the sequence is WFLVDLISSIPVDYIFLVVEL. Residues 192 to 200 are Extracellular-facing; that stretch reads EPRLDAEVY. A helical; Voltage-sensor membrane pass occupies residues 201–221; the sequence is KTARALRIVRFTKILSLLRLL. The Cytoplasmic segment spans residues 222–252; that stretch reads RLSRLIRYIHQWEEIFHMTYDLASAVVRIFN. Residues 253–273 traverse the membrane as a helical segment; sequence LIGMMLLLCHWDGCLQFLVPM. Topologically, residues 274–296 are extracellular; that stretch reads LQDFPSDCWVSMNRMVNHSWGRQ. An N-linked (GlcNAc...) asparagine glycan is attached at asparagine 290. An intramembrane region (pore-forming) is located at residues 297–318; sequence YSHALFKAMSHMLCIGYGQQAP. Residues 319 to 328 lie on the Extracellular side of the membrane; it reads VGMPDVWLTM. Residues 329–349 traverse the membrane as a helical segment; the sequence is LSMIVGATCYAMFIGHATALI. The Cytoplasmic segment spans residues 350–779; sequence QSLDSSRRQY…PRGPQISANM (430 aa). Residues 353-779 form an interaction with KCTD3 region; the sequence is DSSRRQYQEK…PRGPQISANM (427 aa). Glycine 491, glutamate 492, cysteine 494, arginine 501, threonine 502, arginine 542, and arginine 545 together coordinate 3',5'-cyclic AMP. A disordered region spans residues 549 to 569; it reads KNSILQRKRSEPSPGSSGGVM. A Phosphoserine modification is found at serine 633. The segment covering 687–697 has biased composition (polar residues); the sequence is SLSRTGRSQVS. Residues 687-779 form a disordered region; the sequence is SLSRTGRSQV…PRGPQISANM (93 aa).

The protein belongs to the potassium channel HCN family. In terms of assembly, homotetramer. The potassium channel is composed of a homo- or heterotetrameric complex of pore-forming subunits. Interacts with HCN1. Interacts with KCTD3; this interaction increases cell surface expression and current density of this channel. Interacts with PEX5L. Detected in hypothalamus, amygdala, olfactory bulb, hippocampus and retina (at protein level). Highly expressed in brain and heart, in particular in ventricle, atrium and in sinoatrial node (SAN). Detected at low levels in skeletal muscle and lung. Expressed in DRG neurons.

The protein resides in the cell membrane. The catalysed reaction is K(+)(in) = K(+)(out). It catalyses the reaction Na(+)(in) = Na(+)(out). With respect to regulation, unlike HCN2 and HCN4, HCN3 is insensitive to cyclic nucleotides, such as cAMP or cGMP. This lack of sensitivity of HCN3, despite harboring a functional cyclic nucleotide-binding domain (CNBD), may be explained by its shorter C-terminal sequence, which may alter the normal autoinhibition of the channel. Inhibited by Cs(1+) and ivabradine. Phosphatidylinositol-4,5-bisphosphate (PIP(2)) shifts HCN3 activation to more depolarized potentials and accelerated activation kinetics. Hyperpolarization-activated ion channel that are permeable to sodium and potassium ions, with an about 3:1 preference for potassium ions. Contributes to the native pacemaker currents in heart (If) and in neurons (Ih). In particular, plays a pivotal role in maintaining excitability and promoting rhythmic burst firing within hypothalamic nuclei. Exerts a significant influence on the configuration of the cardiac action potential waveform. Does not appear to play a prominent role in the processing of acute, neuropathic, or inflammatory pain. In Mus musculus (Mouse), this protein is Potassium/sodium hyperpolarization-activated cyclic nucleotide-gated channel 3 (Hcn3).